The primary structure comprises 225 residues: Ribosomal RNA small subunit methyltransferase G (225 aa).

S-adenosyl-L-methionine contacts are provided by residues G84, F89, 107–109 (DST), 135–136 (AE), and R154.

Belongs to the methyltransferase superfamily. RNA methyltransferase RsmG family.

The protein resides in the cytoplasm. Specifically methylates the N7 position of a guanine in 16S rRNA. In Microcystis aeruginosa (strain NIES-843 / IAM M-2473), this protein is Ribosomal RNA small subunit methyltransferase G.